Consider the following 356-residue polypeptide: Probable neutral protease 2 homolog ARB_04769 (356 aa).

The first 17 residues, 1-17 (MQFTALLAALGAPLALA), serve as a signal peptide directing secretion. A propeptide spanning residues 18–183 (ASIPAAAHNH…DDSTGVIDKR (166 aa)) is cleaved from the precursor. Intrachain disulfides connect C191-C262 and C269-C287. Residue N205 is glycosylated (N-linked (GlcNAc...) asparagine). H311 contributes to the Zn(2+) binding site. The active site involves E312. Zn(2+)-binding residues include H315 and D326.

The protein belongs to the peptidase M35 family. Zn(2+) serves as cofactor.

The protein resides in the secreted. The catalysed reaction is Preferential cleavage of bonds with hydrophobic residues in P1'. Also 3-Asn-|-Gln-4 and 8-Gly-|-Ser-9 bonds in insulin B chain.. In terms of biological role, probable secreted metalloprotease that shows high activities on basic nuclear substrates such as histone and protamine. May be involved in virulence. The sequence is that of Probable neutral protease 2 homolog ARB_04769 from Arthroderma benhamiae (strain ATCC MYA-4681 / CBS 112371) (Trichophyton mentagrophytes).